The sequence spans 343 residues: Membrane progestin receptor delta (343 aa).

The Cytoplasmic portion of the chain corresponds to 1-49 (MLSLKMPQLLRVHQVPRVFWEEGIMSGYRCPTSSALDCVLSSFQMTNET). The chain crosses the membrane as a helical span at residues 50–70 (VNIWTHFLPTWYFLWRLLALG). The Extracellular segment spans residues 71–79 (SPGFRADPY). The chain crosses the membrane as a helical span at residues 80 to 100 (HLPLLVFLLPACLYPFASCCA). Residues 101–112 (HTFSSMSPRARH) lie on the Cytoplasmic side of the membrane. A helical transmembrane segment spans residues 113–133 (ICYFLDYGALSLYSLGCAFPY). The Extracellular portion of the chain corresponds to 134–146 (AAYSMPASWLHSR). Residues 147–167 (LHQLFVPAAALNSFLCTGLSC) traverse the membrane as a helical segment. The Cytoplasmic portion of the chain corresponds to 168–216 (YSRFPELEYPGFSKALRTAAFAYPFLFDNLPLFYRLRLCWGGAHSCGRD). Residues 217-237 (ALSSNHGYHLLCALLSGFLFA) form a helical membrane-spanning segment. Residues 238 to 257 (ARLPERLAPGRFDYIGHSHQ) lie on the Extracellular side of the membrane. A helical transmembrane segment spans residues 258–278 (LFHICAVLGTHFQLEAVLADM). Over 279 to 291 (GSRRAWLAVQEPT) the chain is Cytoplasmic. The chain crosses the membrane as a helical span at residues 292 to 312 (LGLGATVATLSLAVIGNLFII). Residues 313-343 (AAFTASLLRMPGPCPLLQGSPLEEGLQAKQQ) lie on the Extracellular side of the membrane.

It belongs to the ADIPOR family. In terms of assembly, homodimer.

It is found in the cell membrane. In terms of biological role, plasma membrane progesterone (P4) receptor coupled to G proteins. Seems to act through a G(s) mediated pathway. Involved in neurosteroid inhibition of apoptosis. May be involved in regulating rapid P4 signaling in the nervous system. Also binds dehydroepiandrosterone (DHEA), pregnanolone, pregnenolone and allopregnanolone. The chain is Membrane progestin receptor delta from Mus musculus (Mouse).